Here is a 202-residue protein sequence, read N- to C-terminus: Kunitz trypsin inhibitor 7 (202 aa).

The signal sequence occupies residues 1 to 25 (MKTFRSMLISLLLVAITTTSGVVEG). Cysteines 69 and 115 form a disulfide. N93, N136, N144, and N198 each carry an N-linked (GlcNAc...) asparagine glycan.

It belongs to the protease inhibitor I3 (leguminous Kunitz-type inhibitor) family.

Functionally, exhibits Kunitz trypsin protease inhibitor activity. The polypeptide is Kunitz trypsin inhibitor 7 (Arabidopsis thaliana (Mouse-ear cress)).